We begin with the raw amino-acid sequence, 174 residues long: MKVLFLTIALSLFSILQAQDSSSSEEQFEGTYFVKAIVTDSEFFEKNKPKALSPLTVTHLSNGDLEAKFTTNMNGICEEIKMKFEKTDKPGIFSTNDGSRQVLIEKTSVRDHWILFCEGELHGMQVRIAKLLGPHTDENPKAFQEFKKFVSLKRFNEEKINIPRQTETCIPEHV.

The first 18 residues, 1-18 (MKVLFLTIALSLFSILQA), serve as a signal peptide directing secretion. C77 and C169 are oxidised to a cystine.

The protein belongs to the calycin superfamily. Lipocalin family. Mammary gland specific. Secreted in milk.

Its subcellular location is the secreted. Functionally, probably serves a role in the transport of a small ligand released during the hydrolysis of milk fat. The polypeptide is Late lactation protein B (LLPB) (Notamacropus eugenii (Tammar wallaby)).